The sequence spans 602 residues: Threonine--tRNA ligase (602 aa).

The catalytic stretch occupies residues 208–499 (DHRKLGTELK…LTEHCAGEFP (292 aa)). 3 residues coordinate Zn(2+): cysteine 300, histidine 351, and histidine 476.

This sequence belongs to the class-II aminoacyl-tRNA synthetase family. Homodimer. Zn(2+) serves as cofactor.

The protein localises to the cytoplasm. The catalysed reaction is tRNA(Thr) + L-threonine + ATP = L-threonyl-tRNA(Thr) + AMP + diphosphate + H(+). In terms of biological role, catalyzes the attachment of threonine to tRNA(Thr) in a two-step reaction: L-threonine is first activated by ATP to form Thr-AMP and then transferred to the acceptor end of tRNA(Thr). Also edits incorrectly charged L-seryl-tRNA(Thr). The sequence is that of Threonine--tRNA ligase from Campylobacter jejuni subsp. jejuni serotype O:23/36 (strain 81-176).